The chain runs to 111 residues: Propane 2-monooxygenase, effector component (111 aa).

The protein belongs to the TmoD/XamoD family. In terms of assembly, the propane 2-monooxygenase multicomponent enzyme system is composed of an electron transfer component and a monooxygenase component interacting with the effector protein PrmD. The electron transfer component is composed of a reductase (PrmB), and the monooxygenase component is formed by a large subunit (PrmA) and a small subunit (PrmC).

Functionally, effector component of the propane 2-monooxygenase multicomponent enzyme system which is involved in the degradation of propane via the O2-dependent hydroxylation of propane. The chain is Propane 2-monooxygenase, effector component from Gordonia sp. (strain TY-5).